The following is a 643-amino-acid chain: MSSPSPSSSSSDHPSSPAPVPAPPGPVPEAAAASRASRAPVYLGGFVDVFSYPKDSRALYLNPADVGAHLPLPGPIPLNVEHLQEAHVGWTLGLHLTRYGLFCVAVITAEEFFTLLDRLCAASSVARTRADHHLPPNPTLEMLHTWLPELSLSSIHPDALPGAKGGDTPIFQHVALCAMGQRRGTVAVYGESLDWILSKFTSLSPEERGAIAEGYASPAPESLPEPHFTCSNEILMAKAIDAGFIKNRLEILKTDKGVAEVKAPTYLKASVQGLPANLDEVDSARGGEDPPTAAIATTPHPATDATTMNQQQPFAAQAPAGGCEDLISVPRSTFMTMLQTNLDTMRQTSLGQRFGQPIDAPAAPPAQLRVPPPAAPFPVHPGYYPAPYHPQVDAQAQYLPYVPLPPPGAMPFAPPPLPDFYKYGGIPAPGYSPVAHPARPGKRKRDCDEEFEGPLFPGEIHKDVQSLSKSIAALQSELKDIKNSQQFPQPLPQPQLQPQAQPQPQPAPQLYPAPPQAFYHPAAGDQGYYVRYLNPFQASGGVPCAPGPQGVGEPQAPQVTVTHNGHQAAPQAGGGATGATAANVEQRQPEGGEACGAQQQQPPQPQPQQQQQPQQQAFVEASTKPSQISQLQKIFCEELLNKT.

Low complexity predominate over residues Met-1–Ser-15. The disordered stretch occupies residues Met-1–Ala-31. Positions Ser-16 to Val-27 are enriched in pro residues. Catalysis depends on charge relay system residues His-82, Ser-151, and His-173. A disordered region spans residues Ser-283–Thr-306. The segment covering Pro-290–Thr-306 has biased composition (low complexity). An interaction with pAP region spans residues Glu-324–Asp-343. Positions Arg-439–Arg-445 match the Nuclear localization signal motif. 2 disordered regions span residues Gln-485 to Tyr-519 and Cys-544 to Pro-625. Over residues Gln-489–Pro-515 the composition is skewed to pro residues. Low complexity predominate over residues Pro-607–Gln-616. The interval Thr-623–Thr-643 is interaction with major capsid protein.

It belongs to the herpesviridae capsid scaffolding protein family. In terms of assembly, homomultimer. Interacts with major capsid protein. Exists in a monomer-dimer equilibrium with the dimer being the active species. Capsid scaffolding protein is cleaved by assemblin after formation of the spherical procapsid. As a result, the capsid obtains its mature, icosahedral shape. Cleavages occur at two or more sites: release (R-site) and maturation (M-site).

It localises to the host cytoplasm. The protein resides in the host nucleus. The catalysed reaction is Cleaves -Ala-|-Ser- and -Ala-|-Ala- bonds in the scaffold protein.. Acts as a scaffold protein by binding major capsid protein in the cytoplasm, inducing the nuclear localization of both proteins. Multimerizes in the nucleus such as major capsid protein forms the icosahedral T=16 capsid. Autocatalytic cleavage releases the assembly protein, and subsequently abolishes interaction with major capsid protein. Cleavages products are evicted from the capsid before or during DNA packaging. Its function is as follows. Protease that plays an essential role in virion assembly within the nucleus. Catalyzes the cleavage of the assembly protein after formation of the spherical procapsid. By that cleavage, the capsid matures and gains its icosahedral shape. The cleavage sites seem to include -Ala-Ser-, -Ala-Ala-, as well as Ala-Thr bonds. Assemblin and cleavages products are evicted from the capsid before or during DNA packaging. Functionally, plays a major role in capsid assembly. Acts as a scaffold protein by binding major capsid protein. Multimerizes in the nucleus such as major capsid protein forms the icosahedral T=16 capsid. Cleaved by assemblin after capsid completion. The cleavages products are evicted from the capsid before or during DNA packaging. In Equine herpesvirus 2 (strain 86/87) (EHV-2), this protein is Capsid scaffolding protein.